A 105-amino-acid polypeptide reads, in one-letter code: MPKIRIKLRGFDHKTLDASAQKIVEAARRSGAQVSGPIPLPTRVRRFTVIRGPFKHKDSREHFELRTHNRLVDIINPNRKTIEQLMTLDLPTGVEIEIKTVGGGR.

Belongs to the universal ribosomal protein uS10 family. Part of the 30S ribosomal subunit.

Its function is as follows. Involved in the binding of tRNA to the ribosomes. This is Small ribosomal subunit protein uS10 from Thermus thermophilus (strain ATCC BAA-163 / DSM 7039 / HB27).